The sequence spans 373 residues: Indole glucosinolate O-methyltransferase 3 (373 aa).

5 residues coordinate S-adenosyl-L-homocysteine: Gly-217, Asp-240, Asp-260, Met-261, and Lys-274. Catalysis depends on His-278, which acts as the Proton acceptor.

This sequence belongs to the class I-like SAM-binding methyltransferase superfamily. Cation-independent O-methyltransferase family.

Its pathway is secondary metabolite biosynthesis. Functionally, involved in indole glucosinolate biosynthesis. Catalyzes methoxylation reactions of the glucosinolate indole ring. Converts the hydroxy intermediates 4-hydroxy-indol-3-yl-methylglucosinolate (4OH-I3M) and 1-hydroxy-indol-3-yl-methylglucosinolate (1OH-I3M) to 4-methoxy-indol-3-yl-methylglucosinolate (4MO-I3M) and 1-methoxy-indol-3-yl-methylglucosinolate(1MO-I3M), respectively. The polypeptide is Indole glucosinolate O-methyltransferase 3 (Arabidopsis thaliana (Mouse-ear cress)).